Here is a 160-residue protein sequence, read N- to C-terminus: Envelope glycoprotein L (160 aa).

An N-terminal signal peptide occupies residues 1–22 (MASHKWLLQMIVFLKTITIAYC). Residues 24-149 (HLQDDTPLFF…TNIPENGCVW (126 aa)) are interaction with gH. The gL alphaherpesvirus-type domain occupies 28-160 (DTPLFFGAKP…ADRLFQRVCQ (133 aa)). 2 disulfides stabilise this stretch: cysteine 49–cysteine 80 and cysteine 147–cysteine 159.

Belongs to the herpesviridae glycoprotein L (gL) family. Alphaherpesvirinae gL subfamily. Interacts with glycoprotein H (gH); this interaction is necessary for the correct processing and cell surface expression of gH. The heterodimer gH/gL seems to interact with gB trimers during fusion.

Its subcellular location is the virion membrane. The protein resides in the host cell membrane. The protein localises to the host Golgi apparatus. It is found in the host trans-Golgi network. Its function is as follows. The heterodimer glycoprotein H-glycoprotein L is required for the fusion of viral and plasma membranes leading to virus entry into the host cell. Acts as a functional inhibitor of gH and maintains gH in an inhibited form. Upon binding to host integrins, gL dissociates from gH leading to activation of the viral fusion glycoproteins gB and gH. This chain is Envelope glycoprotein L, found in Varicella-zoster virus (strain Oka vaccine) (HHV-3).